A 184-amino-acid polypeptide reads, in one-letter code: ADP-ribosylation factor-like protein 2 (184 aa).

Gly2 is lipidated: N-myristoyl glycine. Residues 23-30 (GLDNAGKT), 66-70 (DVGGQ), Gly68, and 125-128 (NKSD) contribute to the GTP site.

This sequence belongs to the small GTPase superfamily. Arf family. In the embryo, strongly expressed in migrating hypodermal cells. Shortly before the beginning of elongation, expressed in many developing neurons where it persists throughout adulthood. In the larva, highly expressed in migrating hypodermal cells and the uterus. Also expressed in vulva, spermatheca, sheath cells, distal tips cells and proctoderm of the male tail.

Its subcellular location is the cytoplasm. It localises to the cell membrane. The protein localises to the cytoskeleton. The protein resides in the microtubule organizing center. It is found in the centrosome. In terms of biological role, GTP-binding protein that functions in embryogenesis, cytokinesis, germline development and microtubulule cytoskeleton dynamics. This chain is ADP-ribosylation factor-like protein 2 (evl-20), found in Caenorhabditis elegans.